A 265-amino-acid chain; its full sequence is 4-hydroxy-tetrahydrodipicolinate reductase (265 aa).

9–14 lines the NAD(+) pocket; that stretch reads GPRGRM. Arg37 serves as a coordination point for NADP(+). Residues 98 to 100 and 124 to 127 each bind NAD(+); these read GTT and APNF. His154 serves as the catalytic Proton donor/acceptor. His155 serves as a coordination point for (S)-2,3,4,5-tetrahydrodipicolinate. Lys158 serves as the catalytic Proton donor. 164 to 165 contacts (S)-2,3,4,5-tetrahydrodipicolinate; sequence GT.

The protein belongs to the DapB family.

The protein resides in the cytoplasm. It carries out the reaction (S)-2,3,4,5-tetrahydrodipicolinate + NAD(+) + H2O = (2S,4S)-4-hydroxy-2,3,4,5-tetrahydrodipicolinate + NADH + H(+). It catalyses the reaction (S)-2,3,4,5-tetrahydrodipicolinate + NADP(+) + H2O = (2S,4S)-4-hydroxy-2,3,4,5-tetrahydrodipicolinate + NADPH + H(+). It participates in amino-acid biosynthesis; L-lysine biosynthesis via DAP pathway; (S)-tetrahydrodipicolinate from L-aspartate: step 4/4. Its function is as follows. Catalyzes the conversion of 4-hydroxy-tetrahydrodipicolinate (HTPA) to tetrahydrodipicolinate. The chain is 4-hydroxy-tetrahydrodipicolinate reductase from Geobacillus thermodenitrificans (strain NG80-2).